Here is a 210-residue protein sequence, read N- to C-terminus: ATP-dependent Clp protease proteolytic subunit (210 aa).

Ser107 functions as the Nucleophile in the catalytic mechanism. Residue His132 is part of the active site.

Belongs to the peptidase S14 family. As to quaternary structure, fourteen ClpP subunits assemble into 2 heptameric rings which stack back to back to give a disk-like structure with a central cavity, resembling the structure of eukaryotic proteasomes.

It localises to the cytoplasm. The enzyme catalyses Hydrolysis of proteins to small peptides in the presence of ATP and magnesium. alpha-casein is the usual test substrate. In the absence of ATP, only oligopeptides shorter than five residues are hydrolyzed (such as succinyl-Leu-Tyr-|-NHMec, and Leu-Tyr-Leu-|-Tyr-Trp, in which cleavage of the -Tyr-|-Leu- and -Tyr-|-Trp bonds also occurs).. Cleaves peptides in various proteins in a process that requires ATP hydrolysis. Has a chymotrypsin-like activity. Plays a major role in the degradation of misfolded proteins. The polypeptide is ATP-dependent Clp protease proteolytic subunit (Chromobacterium violaceum (strain ATCC 12472 / DSM 30191 / JCM 1249 / CCUG 213 / NBRC 12614 / NCIMB 9131 / NCTC 9757 / MK)).